The primary structure comprises 349 residues: Phosphoribosylformylglycinamidine cyclo-ligase (349 aa).

This sequence belongs to the AIR synthase family.

It is found in the cytoplasm. The enzyme catalyses 2-formamido-N(1)-(5-O-phospho-beta-D-ribosyl)acetamidine + ATP = 5-amino-1-(5-phospho-beta-D-ribosyl)imidazole + ADP + phosphate + H(+). Its pathway is purine metabolism; IMP biosynthesis via de novo pathway; 5-amino-1-(5-phospho-D-ribosyl)imidazole from N(2)-formyl-N(1)-(5-phospho-D-ribosyl)glycinamide: step 2/2. This chain is Phosphoribosylformylglycinamidine cyclo-ligase, found in Albidiferax ferrireducens (strain ATCC BAA-621 / DSM 15236 / T118) (Rhodoferax ferrireducens).